The following is a 214-amino-acid chain: Charged multivesicular body protein 2b-A (214 aa).

Residues 25 to 55 are a coiled coil; it reads QRAITRDRTALEKQEKQLEMEIKKMAKAGNK. A disordered region spans residues 178 to 214; it reads MAKAPSAAKGLPSASASKSTGISDEEIERQLKALGVD. The MIT-interacting motif signature appears at 202–212; that stretch reads EEIERQLKALG.

This sequence belongs to the SNF7 family. In terms of assembly, probable core component of the endosomal sorting required for transport complex III (ESCRT-III). ESCRT-III components are thought to multimerize to form a flat lattice on the perimeter membrane of the endosome.

It is found in the cytoplasm. The protein resides in the cytosol. Its subcellular location is the late endosome membrane. Functionally, probable core component of the endosomal sorting required for transport complex III (ESCRT-III) which is involved in multivesicular bodies (MVBs) formation and sorting of endosomal cargo proteins into MVBs. MVBs contain intraluminal vesicles (ILVs) that are generated by invagination and scission from the limiting membrane of the endosome and mostly are delivered to lysosomes enabling degradation of membrane proteins, such as stimulated growth factor receptors, lysosomal enzymes and lipids. The protein is Charged multivesicular body protein 2b-A (chmp2b-a) of Xenopus laevis (African clawed frog).